We begin with the raw amino-acid sequence, 428 residues long: Phosphoglucosamine mutase (428 aa).

Serine 96 functions as the Phosphoserine intermediate in the catalytic mechanism. Mg(2+) is bound by residues serine 96, aspartate 229, aspartate 231, and aspartate 233. Serine 96 carries the post-translational modification Phosphoserine.

Belongs to the phosphohexose mutase family. It depends on Mg(2+) as a cofactor. In terms of processing, activated by phosphorylation.

The enzyme catalyses alpha-D-glucosamine 1-phosphate = D-glucosamine 6-phosphate. Functionally, catalyzes the conversion of glucosamine-6-phosphate to glucosamine-1-phosphate. The chain is Phosphoglucosamine mutase from Thermotoga neapolitana (strain ATCC 49049 / DSM 4359 / NBRC 107923 / NS-E).